Here is a 413-residue protein sequence, read N- to C-terminus: Cell surface GPI-anchored protein ECM33 (413 aa).

The signal sequence occupies residues 1–20 (MQIKSFLLPIVAALLTSVSA). 11 N-linked (GlcNAc...) asparagine glycosylation sites follow: asparagine 93, asparagine 102, asparagine 172, asparagine 209, asparagine 222, asparagine 227, asparagine 279, asparagine 290, asparagine 306, asparagine 322, and asparagine 382. The tract at residues 347-390 (YVCTHPANPSSSSKSGSSTQTGKSDSKSSDGSSSSNSSSSSKKG) is disordered. Positions 356–390 (SSSSKSGSSTQTGKSDSKSSDGSSSSNSSSSSKKG) are enriched in low complexity. Glycine 390 carries GPI-anchor amidated glycine lipidation. A propeptide spans 391–413 (ASNVLVVPGMVLTTALGVLLALI) (removed in mature form).

Belongs to the SPS2 family.

The protein localises to the cell membrane. It is found in the secreted. The protein resides in the cell wall. Functionally, cell surface protein required for proper cell wall integrity and for the correct assembly of the mannoprotein outer layer of the cell wall. The chain is Cell surface GPI-anchored protein ECM33 (ECM331) from Candida albicans (strain SC5314 / ATCC MYA-2876) (Yeast).